The following is a 925-amino-acid chain: Bifunctional uridylyltransferase/uridylyl-removing enzyme (925 aa).

Residues 1-382 form a uridylyltransferase region; it reads MVLPTTKDAT…PPGAEVRRVP (382 aa). The uridylyl-removing stretch occupies residues 383–738; it reads DSDDFIIDNN…VGFDEARGVT (356 aa). Positions 498–621 constitute an HD domain; the sequence is VDEHLIRCIG…VQSVERMKLL (124 aa). ACT domains lie at 739–820 and 849–925; these read ELTI…DVMP and MIEV…NTAE.

The protein belongs to the GlnD family. The cofactor is Mg(2+).

The enzyme catalyses [protein-PII]-L-tyrosine + UTP = [protein-PII]-uridylyl-L-tyrosine + diphosphate. The catalysed reaction is [protein-PII]-uridylyl-L-tyrosine + H2O = [protein-PII]-L-tyrosine + UMP + H(+). Its activity is regulated as follows. Uridylyltransferase (UTase) activity is inhibited by glutamine, while glutamine activates uridylyl-removing (UR) activity. In terms of biological role, modifies, by uridylylation and deuridylylation, the PII regulatory proteins (GlnB and homologs), in response to the nitrogen status of the cell that GlnD senses through the glutamine level. Under low glutamine levels, catalyzes the conversion of the PII proteins and UTP to PII-UMP and PPi, while under higher glutamine levels, GlnD hydrolyzes PII-UMP to PII and UMP (deuridylylation). Thus, controls uridylylation state and activity of the PII proteins, and plays an important role in the regulation of nitrogen assimilation and metabolism. This chain is Bifunctional uridylyltransferase/uridylyl-removing enzyme, found in Nitrobacter winogradskyi (strain ATCC 25391 / DSM 10237 / CIP 104748 / NCIMB 11846 / Nb-255).